The chain runs to 618 residues: Grainyhead-like protein 1 homolog (618 aa).

The tract at residues 1-91 (MTQEYDNKRP…EVEHPEPDHS (91 aa)) is transcription activation. Positions 74–92 (RRSSTAKPEVEHPEPDHSK) are enriched in basic and acidic residues. The tract at residues 74-94 (RRSSTAKPEVEHPEPDHSKRN) is disordered. Phosphothreonine is present on Thr208. Positions 248–474 (SGNNFEYTLE…DLDTQPVLFI (227 aa)) constitute a Grh/CP2 DB domain. Interaction with DNA stretches follow at residues 380–389 (TDFSSQKGVK) and 427–430 (RKIR).

This sequence belongs to the grh/CP2 family. Grainyhead subfamily. Binds DNA as homodimer. Homodimer, also forms heterodimers with GRHL2 or GRHL3. Post-translationally, methylation at Arg-9 and Lys-116 may be involved in regulating transcriptional activation.

The protein resides in the nucleus. Its function is as follows. Transcription factor involved in epithelial development. Binds directly to the consensus DNA sequence 5'-AACCGGTT-3'. Important regulator of DSG1 in the context of hair anchorage and epidermal differentiation, participates in the maintenance of the skin barrier. There is no genetic interaction with GRHL3, nor functional cooperativity due to diverse target gene selectivity during epithelia development. May play a role in regulating glucose homeostasis and insulin signaling. The sequence is that of Grainyhead-like protein 1 homolog (GRHL1) from Pongo abelii (Sumatran orangutan).